A 159-amino-acid chain; its full sequence is Ankyrin repeat domain-containing protein 37 (159 aa).

3 ANK repeats span residues 1–25 (MLLL…SVNA), 30–59 (QEQS…DLNQ), and 63–92 (LGET…QIGV). The short motif at 130 to 150 (EQQERDPRAPVLRQKRSFRTV) is the Nuclear localization signal element.

Post-translationally, ubiquitinated by the CRL2(FEM1B) complex, leading to its degradation. Expressed testis, ovary, uterus, kidney, liver, but not in other tissues.

The protein localises to the nucleus. The protein resides in the cytoplasm. This is Ankyrin repeat domain-containing protein 37 from Mus musculus (Mouse).